Reading from the N-terminus, the 44-residue chain is Alpha-amylase inhibitor helianthamide (44 aa).

Cystine bridges form between cysteine 6–cysteine 38, cysteine 16–cysteine 33, and cysteine 20–cysteine 39. Residues tyrosine 7 to histidine 10 form an inhibitory motif region.

Belongs to the sea anemone alpha-amylase inhibitor family.

It is found in the secreted. Its function is as follows. Specific pancreatic alpha-amylase (AMY2A) inhibitor. The recombinant peptide inhibits human pancreatic (Ki=0.01 nM) and porcine pancreatic alpha-amylases (Ki=0.1 nM). The polypeptide is Alpha-amylase inhibitor helianthamide (Stichodactyla helianthus (Sun anemone)).